Reading from the N-terminus, the 41-residue chain is Ranatuerin-2PLg (41 aa).

The propeptide occupies 1–11 (DDGVEMTEEEV). A disulfide bond links Cys36 and Cys41.

This sequence belongs to the frog skin active peptide (FSAP) family. Ranatuerin subfamily.

Its subcellular location is the secreted. In terms of biological role, antimicrobial peptide. This Lithobates palustris (Pickerel frog) protein is Ranatuerin-2PLg.